Reading from the N-terminus, the 484-residue chain is MSLSTLSHPAAAAAGSGKSLFPAGPAAQSVHFPKARLPVPAAVSAATAAVHAEDRVSSLTQVSGVLGSQWGDEGKGKLVDVLAPRFDIVARCQGGANAGHTIYNSEGKKFALHLVPSGILHEGTLCVVGNGAVIHVPGFFGEIDGLESNGVRCGGRILVSDRAHLLFDLHQAVDGLREAELENSFIGTTKRGIGPCYSSKVTRNGLRVCDLRHMDTFGDKLDILFKDAASRFQGFQYSKSLLKEEVERYKKFADRLEPFIADTVHVLNESIKQKKKILVEGGQATMLDIDFGTYPFVTSSSPSAGGICTGLGIAPRAIGDLIGVVKAYTSRVGSGPFPTELFGEEGDRLRKAGMEFGTTTGRPRRCGWLDIVALKHSCQINGFSSLNLTKLDVLSGLSEIKVGVSYTQTDGQKLQSFPGDLDTLEQVQVNYEVLPGWQSDISSVRRYDELPQAARLYVERIEELVGVPVHYIGVGPGRDALIYK.

The transit peptide at 1-44 directs the protein to the chloroplast; that stretch reads MSLSTLSHPAAAAAGSGKSLFPAGPAAQSVHFPKARLPVPAAVS. GTP-binding positions include 71 to 77 and 99 to 101; these read GDEGKGK and GHT. D72 acts as the Proton acceptor in catalysis. Residues D72 and G99 each contribute to the Mg(2+) site. Residues 72–75, 97–100, T189, R203, Q283, T298, and R362 each bind IMP; these read DEGK and NAGH. H100 (proton donor) is an active-site residue. 358–364 is a substrate binding site; it reads TTTGRPR. GTP-binding positions include R364, 390–392, and 473–475; these read KLD and GVG.

This sequence belongs to the adenylosuccinate synthetase family. Homodimer. Mg(2+) is required as a cofactor.

It localises to the plastid. The protein localises to the chloroplast. It catalyses the reaction IMP + L-aspartate + GTP = N(6)-(1,2-dicarboxyethyl)-AMP + GDP + phosphate + 2 H(+). Its pathway is purine metabolism; AMP biosynthesis via de novo pathway; AMP from IMP: step 1/2. In terms of biological role, plays an important role in the de novo pathway and in the salvage pathway of purine nucleotide biosynthesis. Catalyzes the first committed step in the biosynthesis of AMP from IMP. The sequence is that of Adenylosuccinate synthetase, chloroplastic from Zea mays (Maize).